Here is a 353-residue protein sequence, read N- to C-terminus: ATP-dependent (S)-NAD(P)H-hydrate dehydratase (353 aa).

Positions 18–345 constitute a YjeF C-terminal domain; the sequence is MLARVRQMVP…DEVHTAFLNL (328 aa). Positions 95 to 121 are disordered; it reads RSSPPALSSSDSGSSPSRTKSAPDTDP. Positions 96–114 are enriched in low complexity; that stretch reads SSPPALSSSDSGSSPSRTK. Residues G143 and 196 to 202 contribute to the (6S)-NADPHX site; that span reads NVVEFGR. ATP-binding positions include 241–245 and 260–269; these read KGAKD and GGLKRSGGQG. D270 contributes to the (6S)-NADPHX binding site.

This sequence belongs to the NnrD/CARKD family. Requires Mg(2+) as cofactor.

Its subcellular location is the cytoplasm. It carries out the reaction (6S)-NADHX + ATP = ADP + phosphate + NADH + H(+). The enzyme catalyses (6S)-NADPHX + ATP = ADP + phosphate + NADPH + H(+). Catalyzes the dehydration of the S-form of NAD(P)HX at the expense of ATP, which is converted to ADP. Together with NAD(P)HX epimerase, which catalyzes the epimerization of the S- and R-forms, the enzyme allows the repair of both epimers of NAD(P)HX, a damaged form of NAD(P)H that is a result of enzymatic or heat-dependent hydration. This Neurospora crassa (strain ATCC 24698 / 74-OR23-1A / CBS 708.71 / DSM 1257 / FGSC 987) protein is ATP-dependent (S)-NAD(P)H-hydrate dehydratase.